Here is a 131-residue protein sequence, read N- to C-terminus: U-scoloptoxin-Er5e (131 aa).

Positions 1–22 (MKTNCEFPLLCLLIVLVANVEG) are cleaved as a signal peptide. Residues 23–94 (EVEDNELKMV…KRLWRNWERR (72 aa)) constitute a propeptide that is removed on maturation. RLWRNWE repeat units lie at residues 34 to 40 (RLWRNWE), 61 to 67 (RLWRNWE), and 86 to 92 (RLWRNWE). Residue glutamine 95 is modified to Pyrrolidone carboxylic acid. An RLWRNWE 4; approximate repeat occupies 107 to 113 (ELWRNWE). The propeptide occupies 112 to 131 (WEDLKRRQVVDLNDEQKTTG).

It belongs to the scoloptoxin-08 family. As to expression, expressed by the venom gland.

Its subcellular location is the secreted. This chain is U-scoloptoxin-Er5e, found in Ethmostigmus rubripes (Giant centipede).